A 390-amino-acid chain; its full sequence is Serpin B3 (390 aa).

Residue Met1 is modified to N-acetylmethionine.

This sequence belongs to the serpin family. Ov-serpin subfamily. In terms of assembly, interacts with MAPK8/JNK1. As to expression, squamous cells. Expressed in some hepatocellular carcinoma (at protein level).

It localises to the cytoplasm. Functionally, may act as a papain-like cysteine protease inhibitor to modulate the host immune response against tumor cells. Also functions as an inhibitor of UV-induced apoptosis via suppression of the activity of c-Jun NH(2)-terminal kinase (JNK1). This is Serpin B3 (SERPINB3) from Homo sapiens (Human).